The primary structure comprises 282 residues: Pantothenate synthetase (282 aa).

Methionine 30 to histidine 37 serves as a coordination point for ATP. Histidine 37 functions as the Proton donor in the catalytic mechanism. Glutamine 61 is a binding site for (R)-pantoate. Glutamine 61 contributes to the beta-alanine binding site. Glycine 147–aspartate 150 is an ATP binding site. Glutamine 153 serves as a coordination point for (R)-pantoate. Leucine 184–arginine 187 serves as a coordination point for ATP.

The protein belongs to the pantothenate synthetase family. Homodimer.

The protein localises to the cytoplasm. The catalysed reaction is (R)-pantoate + beta-alanine + ATP = (R)-pantothenate + AMP + diphosphate + H(+). It participates in cofactor biosynthesis; (R)-pantothenate biosynthesis; (R)-pantothenate from (R)-pantoate and beta-alanine: step 1/1. Functionally, catalyzes the condensation of pantoate with beta-alanine in an ATP-dependent reaction via a pantoyl-adenylate intermediate. The protein is Pantothenate synthetase of Rhizorhabdus wittichii (strain DSM 6014 / CCUG 31198 / JCM 15750 / NBRC 105917 / EY 4224 / RW1) (Sphingomonas wittichii).